The chain runs to 348 residues: N-acetyl-gamma-glutamyl-phosphate reductase (348 aa).

The active site involves Cys151.

It belongs to the NAGSA dehydrogenase family. Type 1 subfamily.

It localises to the cytoplasm. It carries out the reaction N-acetyl-L-glutamate 5-semialdehyde + phosphate + NADP(+) = N-acetyl-L-glutamyl 5-phosphate + NADPH + H(+). Its pathway is amino-acid biosynthesis; L-arginine biosynthesis; N(2)-acetyl-L-ornithine from L-glutamate: step 3/4. In terms of biological role, catalyzes the NADPH-dependent reduction of N-acetyl-5-glutamyl phosphate to yield N-acetyl-L-glutamate 5-semialdehyde. The sequence is that of N-acetyl-gamma-glutamyl-phosphate reductase from Lachnospira eligens (strain ATCC 27750 / DSM 3376 / VPI C15-48 / C15-B4) (Eubacterium eligens).